Consider the following 677-residue polypeptide: Fermitin family homolog 1 (677 aa).

An FERM domain is found at 96–653 (MLRLRLPNLK…HEYIGGYIFL (558 aa)). Phosphoserine is present on residues Ser170, Ser179, and Ser361. Residues 337–433 (ESEVDEIEAA…EVVPNVNVAE (97 aa)) enclose the PH domain.

It belongs to the kindlin family. Interacts with the cytoplasmic domain of integrins ITGB1 and ITGB3.

The protein localises to the cytoplasm. It localises to the cytoskeleton. It is found in the cell junction. Its subcellular location is the focal adhesion. The protein resides in the cell projection. The protein localises to the ruffle membrane. Functionally, involved in cell adhesion. Contributes to integrin activation. When coexpressed with talin, potentiates activation of ITGA2B. Required for normal keratinocyte proliferation. Required for normal polarization of basal keratinocytes in skin, and for normal cell shape. Required for normal adhesion of keratinocytes to fibronectin and laminin, and for normal keratinocyte migration to wound sites. The chain is Fermitin family homolog 1 (FERMT1) from Pongo abelii (Sumatran orangutan).